We begin with the raw amino-acid sequence, 296 residues long: UBX domain-containing protein 1-A (296 aa).

The UBA domain occupies 1 to 42 (MAECSTLESLIEMGFSSTRAEKALTATGNQGIEPAMDWLVEH). A disordered region spans residues 43 to 216 (EDDPDIDEPS…VQEPPTKKEY (174 aa)). Residues 61 to 75 (TDTADTTDTTDTTDT) are compositionally biased toward low complexity. 3 stretches are compositionally biased toward basic and acidic residues: residues 86–100 (PLTEEEKEKQTKRMM), 107–123 (QNEREEREKKERIEQEK), and 138–178 (KMQE…DRAR). Positions 87–177 (LTEEEKEKQT…KIARDKADRA (91 aa)) form a coiled coil. A compositionally biased stretch (low complexity) spans 191–206 (PAETSIPATTPSPSSP). The UBX domain maps to 214–293 (KEYDQCRIQV…GLVPTAVLIV (80 aa)).

The protein localises to the cytoplasm. Functionally, component of a complex required to couple deglycosylation and proteasome-mediated degradation of misfolded proteins in the endoplasmic reticulum that are retrotranslocated in the cytosol. Involved in ubiquitin-proteasome systems. The chain is UBX domain-containing protein 1-A (ubxn1-a) from Xenopus laevis (African clawed frog).